The primary structure comprises 283 residues: Putative 4-diphosphocytidyl-2-C-methyl-D-erythritol kinase (283 aa).

K10 is a catalytic residue. ATP is bound at residue 94–104; it reads PVCAGLGGGST. D136 is an active-site residue.

The protein belongs to the GHMP kinase family. IspE subfamily.

It carries out the reaction 4-CDP-2-C-methyl-D-erythritol + ATP = 4-CDP-2-C-methyl-D-erythritol 2-phosphate + ADP + H(+). In terms of biological role, catalyzes the phosphorylation of the position 2 hydroxy group of 4-diphosphocytidyl-2C-methyl-D-erythritol. The protein is Putative 4-diphosphocytidyl-2-C-methyl-D-erythritol kinase of Streptococcus agalactiae serotype III (strain NEM316).